The sequence spans 1202 residues: Protein HASTY 1 (1202 aa).

An N-acetylmethionine modification is found at M1.

Belongs to the exportin family. As to quaternary structure, interacts with RAN1. As to expression, expressed in roots, leaves and floral buds.

It is found in the nucleus. Nucleocytoplasmic transporter involved in the nuclear export of microRNAs (miRNAs). Required for several miRNAs accumulation. Specifically required for miR156 accumulation which targets SPL3, SPL4 and SPL5 transcription factors. Involved in plant development through its role in miRNAs processing. Required for vegetative phase change and vegetative to reproductive phase transition. Functionally dependent on RAN1 binding. Does not seem to be involved in small interfering RNAs (siRNAs) processing. This Arabidopsis thaliana (Mouse-ear cress) protein is Protein HASTY 1 (HST1).